Reading from the N-terminus, the 491-residue chain is G2/mitotic-specific cyclin-2 (491 aa).

The residue at position 2 (Ser-2) is an N-acetylserine. Disordered regions lie at residues 59 to 107 (EGSR…DPSS) and 164 to 184 (HPAR…SGKK). Positions 67 to 77 (TRESVSRSTAA) are enriched in polar residues.

The protein belongs to the cyclin family. Cyclin AB subfamily. As to quaternary structure, interacts with NAP1.

In terms of biological role, essential for the control of the cell cycle at the G2/M (mitosis) transition. Interacts with the CDC2 protein kinase to form MPF. G2/M cyclins accumulate steadily during G2 and are abruptly destroyed at mitosis. This chain is G2/mitotic-specific cyclin-2 (CLB2), found in Saccharomyces cerevisiae (strain ATCC 204508 / S288c) (Baker's yeast).